The sequence spans 246 residues: Homeobox protein SIX6 (246 aa).

The segment at residues 128-187 (GEQKTHCFKERTRHLLREWYLQDPYPNPSKKRELAQATGLTPTQVGNWFKNRRQRDRAAA) is a DNA-binding region (homeobox). A disordered region spans residues 190-246 (NRLQQQVLSQGSGRALRAEGDGTPEVLGVATSPAASLSSKAATSAISITSSDSECDI). Residues 191 to 201 (RLQQQVLSQGS) show a composition bias toward polar residues. Thr-212 is subject to Phosphothreonine. Positions 219-246 (ATSPAASLSSKAATSAISITSSDSECDI) are enriched in low complexity. A phosphoserine mark is found at Ser-221, Ser-225, Ser-227, and Ser-228.

This sequence belongs to the SIX/Sine oculis homeobox family. Interacts with TLE4 and TLE5. As to expression, expressed in the developing and adult retina. Also expressed in the hypothalamic and the pituitary regions.

Its subcellular location is the nucleus. Its function is as follows. May be involved in eye development. The protein is Homeobox protein SIX6 (SIX6) of Homo sapiens (Human).